The following is a 109-amino-acid chain: Beta-keratin-related protein (109 aa).

At S2 the chain carries N-acetylserine.

It belongs to the avian keratin family.

In Coturnix japonica (Japanese quail), this protein is Beta-keratin-related protein (BKJ).